The primary structure comprises 97 residues: Protein RnfH (97 aa).

It belongs to the UPF0125 (RnfH) family.

In Halorhodospira halophila (strain DSM 244 / SL1) (Ectothiorhodospira halophila (strain DSM 244 / SL1)), this protein is Protein RnfH.